Reading from the N-terminus, the 78-residue chain is Protein M6 (78 aa).

Belongs to the A9/FIL1 family. In terms of tissue distribution, tapetum of anthers.

The protein localises to the secreted. The protein is Protein M6 (M6) of Lilium henryi (Henry's lily).